Consider the following 94-residue polypeptide: Protein RnfH (94 aa).

It belongs to the UPF0125 (RnfH) family.

This is Protein RnfH from Sodalis glossinidius (strain morsitans).